The primary structure comprises 206 residues: U-scoloptoxin(08)-Cw1a (206 aa).

The first 24 residues, Met1–Ala24, serve as a signal peptide directing secretion. The propeptide occupies Ser25–Arg164. Residues Arg37–Glu43 form an RLWRNWE 1; approximate repeat. The stretch at Arg71 to Glu77 is one RLWRNWE 2; approximate repeat. The RLWRNWE 3; approximate repeat unit spans residues Arg104–Glu110. The stretch at Arg137–Glu143 is one RLWRNWE 4 repeat. Residues Arg164–Asp170 form an RLWRNWE 5; approximate repeat.

This sequence belongs to the scoloptoxin-08 family. Post-translationally, contains 3 disulfide bonds. In terms of tissue distribution, expressed by the venom gland.

It localises to the secreted. This chain is U-scoloptoxin(08)-Cw1a, found in Cormocephalus westwoodi (Westwood's green centipede).